Reading from the N-terminus, the 46-residue chain is Photosystem II reaction center protein K (46 aa).

Positions 1–9 (MLTLLNTFA) are excised as a propeptide. Residues 25–45 (LPLIPLFFFLLVFVWQAAVGF) form a helical membrane-spanning segment.

The protein belongs to the PsbK family. As to quaternary structure, PSII is composed of 1 copy each of membrane proteins PsbA, PsbB, PsbC, PsbD, PsbE, PsbF, PsbH, PsbI, PsbJ, PsbK, PsbL, PsbM, PsbT, PsbX, PsbY, Psb30/Ycf12, peripheral proteins PsbO, CyanoQ (PsbQ), PsbU, PsbV and a large number of cofactors. It forms dimeric complexes.

The protein resides in the cellular thylakoid membrane. In terms of biological role, one of the components of the core complex of photosystem II (PSII). PSII is a light-driven water:plastoquinone oxidoreductase that uses light energy to abstract electrons from H(2)O, generating O(2) and a proton gradient subsequently used for ATP formation. It consists of a core antenna complex that captures photons, and an electron transfer chain that converts photonic excitation into a charge separation. The polypeptide is Photosystem II reaction center protein K (Prochlorococcus marinus (strain MIT 9515)).